Consider the following 352-residue polypeptide: Beta-hexosaminidase (352 aa).

Substrate contacts are provided by residues Asp74, Arg82, Arg149, and 179 to 180 (KH). The active-site Proton donor/acceptor is His192. Asp263 serves as the catalytic Nucleophile.

It belongs to the glycosyl hydrolase 3 family. NagZ subfamily.

The protein resides in the cytoplasm. It catalyses the reaction Hydrolysis of terminal non-reducing N-acetyl-D-hexosamine residues in N-acetyl-beta-D-hexosaminides.. Its pathway is cell wall biogenesis; peptidoglycan recycling. In terms of biological role, plays a role in peptidoglycan recycling by cleaving the terminal beta-1,4-linked N-acetylglucosamine (GlcNAc) from peptide-linked peptidoglycan fragments, giving rise to free GlcNAc, anhydro-N-acetylmuramic acid and anhydro-N-acetylmuramic acid-linked peptides. The protein is Beta-hexosaminidase of Bordetella pertussis (strain Tohama I / ATCC BAA-589 / NCTC 13251).